The primary structure comprises 586 residues: Eukaryotic translation initiation factor 3 subunit D (586 aa).

Disordered regions lie at residues 16 to 37 and 104 to 176; these read EDSW…YAPF and KRTF…REPS. Gly residues predominate over residues 108–131; the sequence is GRGGGTVFRGRAQRGGAGQRGGRA. The span at 162 to 174 shows a compositional bias: basic and acidic residues; it reads GWKDYDKPQRTRE. Residues 301-315 are RNA gate; it reads SIDLVTVNENAADAP. Residues 563–586 form a disordered region; the sequence is ANTFEEDDEAADEQEEKATEESEE. Positions 566–577 are enriched in acidic residues; the sequence is FEEDDEAADEQE.

This sequence belongs to the eIF-3 subunit D family. In terms of assembly, component of the eukaryotic translation initiation factor 3 (eIF-3) complex.

The protein localises to the cytoplasm. In terms of biological role, mRNA cap-binding component of the eukaryotic translation initiation factor 3 (eIF-3) complex, which is involved in protein synthesis of a specialized repertoire of mRNAs and, together with other initiation factors, stimulates binding of mRNA and methionyl-tRNAi to the 40S ribosome. The eIF-3 complex specifically targets and initiates translation of a subset of mRNAs involved in cell proliferation. In the eIF-3 complex, eif3d specifically recognizes and binds the 7-methylguanosine cap of a subset of mRNAs. The polypeptide is Eukaryotic translation initiation factor 3 subunit D (Aspergillus clavatus (strain ATCC 1007 / CBS 513.65 / DSM 816 / NCTC 3887 / NRRL 1 / QM 1276 / 107)).